We begin with the raw amino-acid sequence, 249 residues long: MELARHSFQQPLNVAPSLSNVVNKTSVVLQQQSVIQPNQHQLQHQLQTMHDGGIDGKRREILARRPSYRRILDDLAGDGPVKMENYDDTGSSGESSPNGNNEEDINGINQSVSHQEKQYQSIHLNGIVSSVQGGENSLNQLHDSQPGDNQYIITTQGPDNKIQAYTIKGTLPIGLDNTSLASPHQLAEEATRKRELRLYKNREAARECRRKKKEYVKCLENRVAVLENQNKALIEELKSLKDLYCSKGD.

Positions 35-94 (IQPNQHQLQHQLQTMHDGGIDGKRREILARRPSYRRILDDLAGDGPVKMENYDDTGSSGE) constitute a KID domain. The tract at residues 73 to 106 (DDLAGDGPVKMENYDDTGSSGESSPNGNNEEDIN) is disordered. Residues 90 to 100 (GSSGESSPNGN) show a composition bias toward low complexity. A bZIP domain is found at 191–249 (TRKRELRLYKNREAARECRRKKKEYVKCLENRVAVLENQNKALIEELKSLKDLYCSKGD). Residues 192 to 217 (RKRELRLYKNREAARECRRKKKEYVK) form a basic motif region. Residues 219 to 240 (LENRVAVLENQNKALIEELKSL) form a leucine-zipper region.

Belongs to the bZIP family. As to quaternary structure, binds DNA as a dimer.

Its subcellular location is the nucleus. Functionally, this protein binds the cAMP response element (CRE), sequence present in many viral and cellular promoters. Could regulate the transcriptional activity of genes involved in regeneration processes. This is Cyclic AMP-responsive element-binding protein (CREB) from Hydra viridissima (Green hydra).